A 726-amino-acid chain; its full sequence is NHL repeat-containing protein 2 (726 aa).

NHL repeat units lie at residues 212–254, 265–307, 335–369, 409–439, 461–505, and 518–562; these read KLYK…VWKN, NPGR…IDLE, ISSPWDVVFGRSGPEVQRDNILWIAMAGTHQIWAL, FAQPSGLSLASEGPWSCLFVADSESSTVRTV, AFGD…VDPK, and ASNM…LDLE.

Monomer.

It is found in the cytoplasm. It localises to the cytosol. In terms of biological role, required for normal embryonic development. This Bos taurus (Bovine) protein is NHL repeat-containing protein 2 (NHLRC2).